A 320-amino-acid chain; its full sequence is UV DNA damage endonuclease (320 aa).

The protein belongs to the uve1/UvsE family.

Functionally, component in a DNA repair pathway. Removal of UV LIGHT damaged nucleotides. Recognizes pyrimidine dimers and cleave a phosphodiester bond immediately 5' to the lesion. This chain is UV DNA damage endonuclease, found in Bacillus velezensis (strain DSM 23117 / BGSC 10A6 / LMG 26770 / FZB42) (Bacillus amyloliquefaciens subsp. plantarum).